Here is a 210-residue protein sequence, read N- to C-terminus: Orotate phosphoribosyltransferase (210 aa).

5-phospho-alpha-D-ribose 1-diphosphate-binding positions include Arg96, Lys100, His102, and 122-130 (EDLISTGGS). Ser126 is a binding site for orotate.

It belongs to the purine/pyrimidine phosphoribosyltransferase family. PyrE subfamily. Homodimer. Mg(2+) serves as cofactor.

The catalysed reaction is orotidine 5'-phosphate + diphosphate = orotate + 5-phospho-alpha-D-ribose 1-diphosphate. It participates in pyrimidine metabolism; UMP biosynthesis via de novo pathway; UMP from orotate: step 1/2. Functionally, catalyzes the transfer of a ribosyl phosphate group from 5-phosphoribose 1-diphosphate to orotate, leading to the formation of orotidine monophosphate (OMP). The sequence is that of Orotate phosphoribosyltransferase from Streptococcus pneumoniae serotype 4 (strain ATCC BAA-334 / TIGR4).